The chain runs to 212 residues: Transmembrane emp24 domain-containing protein p24delta7 (212 aa).

A signal peptide spans 1 to 22; it reads MNHRRSSIVLLILSILSPVTLS. At 23 to 179 the chain is on the lumenal side; the sequence is IRYELLSGHT…HNLNIATNSK (157 aa). The 116-residue stretch at 32–147 folds into the GOLD domain; that stretch reads TKCISEEIHA…VETMEFEVKK (116 aa). The stretch at 162 to 175 forms a coiled coil; sequence LRDREEEMHNLNIA. R165 is modified (omega-N-methylated arginine). Residues 180–200 form a helical membrane-spanning segment; that stretch reads MAWLSFVSLAVCLSVAGLQFW. The Cytoplasmic segment spans residues 201-212; sequence HLKTFFQKKKLI. The COPII vesicle coat-binding signature appears at 205 to 206; that stretch reads FF. The short motif at 205-212 is the COPI vesicle coat-binding element; it reads FFQKKKLI.

Belongs to the EMP24/GP25L family. In terms of assembly, probably oligomerizes with other members of the EMP24/GP25L family. Associates with the COPI vesicle coat (coatomer). Associates with the COPII vesicle coat (coatomer).

It is found in the endoplasmic reticulum membrane. The protein resides in the golgi apparatus. Its subcellular location is the cis-Golgi network membrane. It localises to the golgi stack membrane. Its function is as follows. Involved in vesicular protein trafficking. Mainly functions in the early secretory pathway. Thought to act as cargo receptor at the lumenal side for incorporation of secretory cargo molecules into transport vesicles and to be involved in vesicle coat formation at the cytoplasmic side. The polypeptide is Transmembrane emp24 domain-containing protein p24delta7 (Arabidopsis thaliana (Mouse-ear cress)).